The sequence spans 71 residues: Small ribosomal subunit protein bS21 (71 aa).

The segment at 48–71 is disordered; sequence ENATLAKRHAKRNARENARNTRLY. Over residues 60 to 71 the composition is skewed to basic and acidic residues; the sequence is NARENARNTRLY.

This sequence belongs to the bacterial ribosomal protein bS21 family.

The sequence is that of Small ribosomal subunit protein bS21 from Haemophilus influenzae (strain 86-028NP).